Consider the following 160-residue polypeptide: Nucleotide-binding protein Noc_2254 (160 aa).

This sequence belongs to the YajQ family.

Nucleotide-binding protein. The sequence is that of Nucleotide-binding protein Noc_2254 from Nitrosococcus oceani (strain ATCC 19707 / BCRC 17464 / JCM 30415 / NCIMB 11848 / C-107).